Reading from the N-terminus, the 219-residue chain is 2-hydroxy-3-keto-5-methylthiopentenyl-1-phosphate phosphatase (219 aa).

This sequence belongs to the HAD-like hydrolase superfamily. MtnX family.

It carries out the reaction 2-hydroxy-5-methylsulfanyl-3-oxopent-1-enyl phosphate + H2O = 1,2-dihydroxy-5-(methylsulfanyl)pent-1-en-3-one + phosphate. It functions in the pathway amino-acid biosynthesis; L-methionine biosynthesis via salvage pathway; L-methionine from S-methyl-5-thio-alpha-D-ribose 1-phosphate: step 4/6. Functionally, dephosphorylates 2-hydroxy-3-keto-5-methylthiopentenyl-1-phosphate (HK-MTPenyl-1-P) yielding 1,2-dihydroxy-3-keto-5-methylthiopentene (DHK-MTPene). The protein is 2-hydroxy-3-keto-5-methylthiopentenyl-1-phosphate phosphatase of Exiguobacterium sibiricum (strain DSM 17290 / CCUG 55495 / CIP 109462 / JCM 13490 / 255-15).